We begin with the raw amino-acid sequence, 250 residues long: uncharacterized protein (250 aa).

It to Synechocystis PCC 6803 sll0249.

This is an uncharacterized protein from Nostoc sp. (strain PCC 7120 / SAG 25.82 / UTEX 2576).